The sequence spans 174 residues: MATGPRYKVPFRRRREGRTNYHLRLKLLISKQDRVVVRKSARNVQIQLIAPTPEGDITYSSAVSSELAKYGYTGVTGNTTAAYLTGLLFGLKSLKKGYEGGILDIGLQASSAGSRVYAALKGIVDSGFEVPCSPEVFPSDERIRGEHIAEYREESSDLPEQFEATKEKIFAEFS.

The protein belongs to the universal ribosomal protein uL18 family. As to quaternary structure, part of the 50S ribosomal subunit. Contacts the 5S and 23S rRNAs.

This is one of the proteins that bind and probably mediate the attachment of the 5S RNA into the large ribosomal subunit, where it forms part of the central protuberance. This Methanosarcina barkeri (strain Fusaro / DSM 804) protein is Large ribosomal subunit protein uL18.